A 136-amino-acid chain; its full sequence is Large ribosomal subunit protein uL16 (136 aa).

The protein belongs to the universal ribosomal protein uL16 family. As to quaternary structure, part of the 50S ribosomal subunit.

Binds 23S rRNA and is also seen to make contacts with the A and possibly P site tRNAs. The chain is Large ribosomal subunit protein uL16 from Mannheimia succiniciproducens (strain KCTC 0769BP / MBEL55E).